Reading from the N-terminus, the 91-residue chain is MPRSLKKGPFIDLHLLKKVETAVEKSDRKPIKTWSRRSMILPNMVGLTIAVHNGRQHVPVHVSEEMVGHKLGEFAATRTYRGHAADKKAKR.

Belongs to the universal ribosomal protein uS19 family.

In terms of biological role, protein S19 forms a complex with S13 that binds strongly to the 16S ribosomal RNA. This Chromohalobacter salexigens (strain ATCC BAA-138 / DSM 3043 / CIP 106854 / NCIMB 13768 / 1H11) protein is Small ribosomal subunit protein uS19.